The primary structure comprises 404 residues: 5-azacytidine-induced protein 2 (404 aa).

Positions 1–198 (MDTLVEDDIC…TELQKARQTG (198 aa)) are homodimerization. Positions 40–198 (ALVTAYEDIK…TELQKARQTG (159 aa)) form a coiled coil. The interval 229 to 269 (SDHMQHAYWELRREMANLHLVTRVQAELLRQLKTAAAGKAC) is interaction with TBK1 and IKBKE. A Phosphoserine modification is found at Ser330. Disordered regions lie at residues 332–351 (TDNE…HNSY) and 356–390 (LEDN…LPPL). Ser365 carries the phosphoserine modification.

As to quaternary structure, homodimer. Interacts with IKBKE, TBK1 and TICAM1. Interacts with TAX1BP1. Interacts with CALCOCO2. In terms of processing, ubiquitinated via 'Lys-48'-linked polyubiquitination by TRIM38, leading to its degradation.

The protein localises to the cytoplasm. Adapter protein which binds TBK1 and IKBKE playing a role in antiviral innate immunity. Activates serine/threonine-protein kinase TBK1 and facilitates its oligomerization. Enhances the phosphorylation of NF-kappa-B p65 subunit RELA by TBK1. Promotes TBK1-induced as well as TNF-alpha or PMA-induced activation of NF-kappa-B. Participates in IFNB promoter activation via TICAM1. This Rattus norvegicus (Rat) protein is 5-azacytidine-induced protein 2 (Azi2).